A 335-amino-acid chain; its full sequence is Mesoderm-specific transcript homolog protein (335 aa).

The next 3 helical transmembrane spans lie at 13–33 (WWVQVGLLAVPLLAAYLHIPP), 88–108 (IWEGLTLSFHRVIALDFLGFG), and 266–286 (VGALASVSIPIHFIYGPLDPV). The AB hydrolase-1 domain maps to 71–310 (IVVLLHGFPT…PRSTVSILDD (240 aa)). An RVIALD motif is present at residues 98–103 (RVIALD).

Belongs to the AB hydrolase superfamily. No detectable transcripts during preimplantation development. Isoform 1 was not detected in either in vitro-matured oocytes (IVF) or parthenogenetically activated (PA) blastocyst. Isoform 2 was expressed in IVF and PA blastocysts.

It is found in the endoplasmic reticulum membrane. The sequence is that of Mesoderm-specific transcript homolog protein (MEST) from Bos taurus (Bovine).